The sequence spans 130 residues: ATP synthase epsilon chain (130 aa).

This sequence belongs to the ATPase epsilon chain family. In terms of assembly, F-type ATPases have 2 components, CF(1) - the catalytic core - and CF(0) - the membrane proton channel. CF(1) has five subunits: alpha(3), beta(3), gamma(1), delta(1), epsilon(1). CF(0) has three main subunits: a, b and c.

It localises to the cell inner membrane. Its function is as follows. Produces ATP from ADP in the presence of a proton gradient across the membrane. The chain is ATP synthase epsilon chain from Campylobacter lari (strain RM2100 / D67 / ATCC BAA-1060).